The following is a 262-amino-acid chain: Acyl-coenzyme A diphosphatase FITM2 (262 aa).

Residues 1–23 are Cytoplasmic-facing; it reads MEHLERCAWVLRGTLVRAAVRRY. A helical membrane pass occupies residues 24-44; sequence LPWALAASMLAGSLLKELSPL. Over 45 to 57 the chain is Lumenal; it reads PESYLSNKRNVLN. The helical transmembrane segment at 58–78 threads the bilayer; that stretch reads VYFVKVAWAWTFCLLLPFIAL. The Cytoplasmic portion of the chain corresponds to 79 to 93; that stretch reads TNYHLTGKAGLVLRR. A helical transmembrane segment spans residues 94–114; that stretch reads LSTLLVGTAIWYVCTAIFSNV. Residues 115–145 lie on the Lumenal side of the membrane; the sequence is EHYTGSCYQSPALEGVRNEPLSKQQCHGQGG. Residues 146–166 form a helical membrane-spanning segment; the sequence is FWHGFDISGHSFLLTFCALMI. Histidine 155 is a catalytic residue. At 167-185 the chain is on the cytoplasmic side; sequence VEEMAVLHEVKTDRSHCLH. A helical membrane pass occupies residues 186 to 206; sequence VAITALVVALGFLTFIWVWMF. The Lumenal portion of the chain corresponds to 207–218; it reads LCTAVYFHNLSQ. Histidine 214 is an active-site residue. A helical transmembrane segment spans residues 219 to 239; sequence KVFGTLFGLLGWYGTYGFWYL. The Cytoplasmic portion of the chain corresponds to 240-262; sequence KSFSPGLPPQSCSSNLKQDSYKR.

Belongs to the FIT family. FIT2 subfamily.

The protein resides in the endoplasmic reticulum membrane. The catalysed reaction is an acyl-CoA + H2O = an acyl-4'-phosphopantetheine + adenosine 3',5'-bisphosphate + 2 H(+). It catalyses the reaction (9Z)-octadecenoyl-CoA + H2O = S-(9Z-octadecenoyl)-4'-phosphopantetheine + adenosine 3',5'-bisphosphate + 2 H(+). The enzyme catalyses (5Z,8Z,11Z,14Z)-eicosatetraenoyl-CoA + H2O = S-(5Z,8Z,11Z,14Z-eicosatetraenoyl)-4'-phosphopantetheine + adenosine 3',5'-bisphosphate + 2 H(+). It carries out the reaction hexadecanoyl-CoA + H2O = S-hexadecanoyl-4'-phosphopantetheine + adenosine 3',5'-bisphosphate + 2 H(+). In terms of biological role, fatty acyl-coenzyme A (CoA) diphosphatase that hydrolyzes fatty acyl-CoA to yield acyl-4'-phosphopantetheine and adenosine 3',5'-bisphosphate. Preferentially hydrolyzes unsaturated long-chain acyl-CoA substrates such as oleoyl-CoA/(9Z)-octadecenoyl-CoA and arachidonoyl-CoA/(5Z,8Z,11Z,14Z)-eicosatetraenoyl-CoA in the endoplasmic reticulum (ER) lumen. This catalytic activity is required for maintaining ER structure and for lipid droplets (LDs) biogenesis, which are lipid storage organelles involved in maintaining lipid and energy homeostasis. Directly binds to diacylglycerol (DAGs) and triacylglycerol, which is also important for LD biogenesis. May support directional budding of nacent LDs from the ER into the cytosol by reducing DAG levels at sites of LD formation. Plays a role in the regulation of cell morphology and cytoskeletal organization. In Sus scrofa (Pig), this protein is Acyl-coenzyme A diphosphatase FITM2.